The primary structure comprises 319 residues: tRNA (guanine(9)-N(1))-methyltransferase Trmt10A (319 aa).

Disordered stretches follow at residues 16 to 87 (LSLN…KRQL) and 275 to 319 (AKIT…SLDS). Residues 17–33 (SLNNCPGTTPGTPMSKN) are compositionally biased toward polar residues. Residues 35–42 (LKKQRKLA) carry the Nuclear localization signal motif. Basic and acidic residues-rich tracts occupy residues 40 to 58 (KLAEFAELRKLRREREREK), 78 to 87 (SRKELKKRQL), and 276 to 302 (KITDKKEPNHCLEQQDEKQKQEAESDK). Residues 44–67 (FAELRKLRREREREKKKQKRREAK) are a coiled coil. Residues 83 to 274 (KKRQLADGGK…ETIPMRKGAK (192 aa)) enclose the SAM-dependent MTase TRM10-type domain.

Belongs to the class IV-like SAM-binding methyltransferase superfamily. TRM10 family.

The protein localises to the nucleus. It localises to the nucleolus. The protein resides in the chromosome. It catalyses the reaction guanosine(9) in tRNA + S-adenosyl-L-methionine = N(1)-methylguanosine(9) in tRNA + S-adenosyl-L-homocysteine + H(+). Its function is as follows. S-adenosyl-L-methionine-dependent guanine N(1)-methyltransferase that catalyzes the formation of N(1)-methylguanine at position 9 (m1G9) in tRNAs. Modulates Mettl3-mediated N6-methyladenosine (m6A) methylation of mRNA 5'-UTRs and 3'-UTRs independent of its methyltransferase activity; influences mRNA stability and protein levels, in particular of Hsp70 chaperone proteins and other stress response proteins. Also regulates stability of transcripts encoding proteins involved in signaling processes and proteins involved in neurogenesis and axon guidance pathways. The polypeptide is tRNA (guanine(9)-N(1))-methyltransferase Trmt10A (Drosophila melanogaster (Fruit fly)).